A 428-amino-acid chain; its full sequence is Probable pectin lyase F (428 aa).

A signal peptide spans 1–20; that stretch reads MVLLHPLLTAAALLGASARA. Cys-83 and Cys-107 are disulfide-bonded. Residue Arg-257 is part of the active site. N-linked (GlcNAc...) asparagine glycosylation is present at Asn-276. The cysteines at positions 324 and 332 are disulfide-linked. Disordered regions lie at residues 337 to 367 and 383 to 428; these read LTSS…MTTD and GSGG…HHHY. Residues 389 to 417 are compositionally biased toward low complexity; the sequence is AASSSASITPSPTSSAIPSSSATPSSSAY. Over residues 418 to 428 the composition is skewed to basic residues; sequence ARRHYARHHHY.

The protein belongs to the polysaccharide lyase 1 family.

It is found in the secreted. It carries out the reaction Eliminative cleavage of (1-&gt;4)-alpha-D-galacturonan methyl ester to give oligosaccharides with 4-deoxy-6-O-methyl-alpha-D-galact-4-enuronosyl groups at their non-reducing ends.. Its function is as follows. Pectinolytic enzymes consist of four classes of enzymes: pectin lyase, polygalacturonase, pectin methylesterase and rhamnogalacturonase. Among pectinolytic enzymes, pectin lyase is the most important in depolymerization of pectin, since it cleaves internal glycosidic bonds of highly methylated pectins. This Aspergillus flavus (strain ATCC 200026 / FGSC A1120 / IAM 13836 / NRRL 3357 / JCM 12722 / SRRC 167) protein is Probable pectin lyase F (pelF).